A 469-amino-acid chain; its full sequence is Glutamate--tRNA ligase (469 aa).

The 'HIGH' region signature appears at 9–19 (PSPTGYLHVGG). Zn(2+)-binding residues include Cys-98, Cys-100, Cys-125, and Asp-127. A 'KMSKS' region motif is present at residues 237 to 241 (KLSKR). Lys-240 serves as a coordination point for ATP.

This sequence belongs to the class-I aminoacyl-tRNA synthetase family. Glutamate--tRNA ligase type 1 subfamily. In terms of assembly, monomer. Zn(2+) is required as a cofactor.

It localises to the cytoplasm. It carries out the reaction tRNA(Glu) + L-glutamate + ATP = L-glutamyl-tRNA(Glu) + AMP + diphosphate. Its function is as follows. Catalyzes the attachment of glutamate to tRNA(Glu) in a two-step reaction: glutamate is first activated by ATP to form Glu-AMP and then transferred to the acceptor end of tRNA(Glu). The chain is Glutamate--tRNA ligase from Erwinia tasmaniensis (strain DSM 17950 / CFBP 7177 / CIP 109463 / NCPPB 4357 / Et1/99).